We begin with the raw amino-acid sequence, 944 residues long: Serine/threonine-protein kinase PLK4 (944 aa).

One can recognise a Protein kinase domain in the interval 12–265; that stretch reads FKVLNLLGKG…LSSVLDHAFM (254 aa). ATP contacts are provided by residues 18–26 and Lys-41; that span reads LGKGSFACV. Asp-136 functions as the Proton acceptor in the catalytic mechanism. Disordered regions lie at residues 327–396, 432–463, and 530–561; these read KDKH…YSER, RSLE…RSND, and LGIK…QQAF. Residues 378–394 show a composition bias toward polar residues; that stretch reads RSGTSQSQTYAKPSSYS. Residues 432–447 show a composition bias toward basic and acidic residues; the sequence is RSLERHTSPPVKEKTP. Positions 548-561 are enriched in polar residues; sequence FGEQSKSRVPQQAF. Positions 565-678 constitute a Cryptic POLO box 1 (CPB1) domain; that stretch reads TLRSIISPLN…AKFIKLVRSK (114 aa). One can recognise a Cryptic POLO box 2 (CPB2) domain in the interval 679 to 791; that stretch reads TPKVTYYTRY…GRRPALAESP (113 aa). The interval 786-809 is disordered; that stretch reads ALAESPKTQPTPSVDSARERKEEQ. Positions 862–940 constitute a POLO box domain; the sequence is QVLKSVFVEN…LSSILMLFAS (79 aa).

Belongs to the protein kinase superfamily. Ser/Thr protein kinase family. CDC5/Polo subfamily. Homodimer. Ubiquitinated; leading to its degradation by the proteasome.

Its subcellular location is the cytoplasm. The protein resides in the cytoskeleton. The protein localises to the microtubule organizing center. It is found in the centrosome. It localises to the centriole. It carries out the reaction L-seryl-[protein] + ATP = O-phospho-L-seryl-[protein] + ADP + H(+). It catalyses the reaction L-threonyl-[protein] + ATP = O-phospho-L-threonyl-[protein] + ADP + H(+). Its function is as follows. Serine/threonine-protein kinase that plays a central role in centriole duplication. Able to trigger procentriole formation on the surface of the parental centriole cylinder, leading to the recruitment of centriole biogenesis proteins such as sass6, cpap, ccp110, cep135 and gamma-tubulin. When overexpressed, it is able to induce centrosome amplification through the simultaneous generation of multiple procentrioles adjoining each parental centriole during S phase. Its central role in centriole replication suggests a possible role in tumorigenesis, centrosome aberrations being frequently observed in tumors. Also involved in deuterosome-mediated centriole amplification in multiciliated that can generate more than 100 centrioles. The sequence is that of Serine/threonine-protein kinase PLK4 from Xenopus laevis (African clawed frog).